The chain runs to 207 residues: NADH-ubiquinone oxidoreductase chain 6 (207 aa).

5 helical membrane-spanning segments follow: residues 15–35 (ILLD…ILVS), 40–60 (SILY…LIGI), 66–86 (LYIL…LSLF), 116–136 (LFIL…NNIY), and 184–204 (ILLI…IVLT).

It belongs to the complex I subunit 6 family.

It is found in the mitochondrion membrane. The enzyme catalyses a ubiquinone + NADH + 5 H(+)(in) = a ubiquinol + NAD(+) + 4 H(+)(out). Functionally, core subunit of the mitochondrial membrane respiratory chain NADH dehydrogenase (Complex I) that is believed to belong to the minimal assembly required for catalysis. Complex I functions in the transfer of electrons from NADH to the respiratory chain. The immediate electron acceptor for the enzyme is believed to be ubiquinone. The polypeptide is NADH-ubiquinone oxidoreductase chain 6 (ND6) (Wickerhamomyces canadensis (Yeast)).